The following is a 193-amino-acid chain: Bcl-2-binding component 3 (193 aa).

2 disordered regions span residues 1-31 (MARARQEGSSPEPVEGLARDSPRPFPLGRLM) and 71-131 (ALGG…VEEE). At serine 10 the chain carries Phosphoserine. Positions 137–151 (IGAQLRRMADDLNAQ) match the BH3 motif.

It belongs to the Bcl-2 family. Interacts with MCL1 and BCL2A1. Interacts with BCL2 and BCL2L1/BCL-XL. Interacts (via BH3 domain) with NOL3 (via CARD domain); this interaction prevents BBC3 association with BCL2 and results in CASP8 activation.

It localises to the mitochondrion. Its function is as follows. Essential mediator of p53/TP53-dependent and p53/TP53-independent apoptosis. Promotes partial unfolding of BCL2L1 and dissociation of BCL2L1 from p53/TP53, releasing the bound p53/TP53 to induce apoptosis. Regulates ER stress-induced neuronal apoptosis. The sequence is that of Bcl-2-binding component 3 (Bbc3) from Mus musculus (Mouse).